Consider the following 274-residue polypeptide: Large ribosomal subunit protein uL2 (274 aa).

The tract at residues 224 to 256 (AMNPIDHPHGGGEGRTGEGRHAVDPWGNLTKGY) is disordered. Over residues 229-246 (DHPHGGGEGRTGEGRHAV) the composition is skewed to basic and acidic residues.

The protein belongs to the universal ribosomal protein uL2 family. Part of the 50S ribosomal subunit. Forms a bridge to the 30S subunit in the 70S ribosome.

Functionally, one of the primary rRNA binding proteins. Required for association of the 30S and 50S subunits to form the 70S ribosome, for tRNA binding and peptide bond formation. It has been suggested to have peptidyltransferase activity; this is somewhat controversial. Makes several contacts with the 16S rRNA in the 70S ribosome. This Acidovorax ebreus (strain TPSY) (Diaphorobacter sp. (strain TPSY)) protein is Large ribosomal subunit protein uL2.